We begin with the raw amino-acid sequence, 347 residues long: Holliday junction branch migration complex subunit RuvB (347 aa).

Positions 1 to 185 are large ATPase domain (RuvB-L); the sequence is MSDDPTTPEL…FGFTAHLEFY (185 aa). Residues Leu-24, Arg-25, Gly-66, Lys-69, Thr-70, Thr-71, 132–134, Arg-175, Tyr-185, and Arg-222 contribute to the ATP site; that span reads EDF. Thr-70 is a binding site for Mg(2+). A small ATPAse domain (RuvB-S) region spans residues 186-255; the sequence is DEGELAQVLA…AVHAALELYD (70 aa). The segment at 258 to 347 is head domain (RuvB-H); the sequence is ELGLDRLDRA…SQPPSLMDDL (90 aa). Arg-313 and Arg-318 together coordinate DNA.

This sequence belongs to the RuvB family. As to quaternary structure, homohexamer. Forms an RuvA(8)-RuvB(12)-Holliday junction (HJ) complex. HJ DNA is sandwiched between 2 RuvA tetramers; dsDNA enters through RuvA and exits via RuvB. An RuvB hexamer assembles on each DNA strand where it exits the tetramer. Each RuvB hexamer is contacted by two RuvA subunits (via domain III) on 2 adjacent RuvB subunits; this complex drives branch migration. In the full resolvosome a probable DNA-RuvA(4)-RuvB(12)-RuvC(2) complex forms which resolves the HJ.

Its subcellular location is the cytoplasm. The catalysed reaction is ATP + H2O = ADP + phosphate + H(+). The RuvA-RuvB-RuvC complex processes Holliday junction (HJ) DNA during genetic recombination and DNA repair, while the RuvA-RuvB complex plays an important role in the rescue of blocked DNA replication forks via replication fork reversal (RFR). RuvA specifically binds to HJ cruciform DNA, conferring on it an open structure. The RuvB hexamer acts as an ATP-dependent pump, pulling dsDNA into and through the RuvAB complex. RuvB forms 2 homohexamers on either side of HJ DNA bound by 1 or 2 RuvA tetramers; 4 subunits per hexamer contact DNA at a time. Coordinated motions by a converter formed by DNA-disengaged RuvB subunits stimulates ATP hydrolysis and nucleotide exchange. Immobilization of the converter enables RuvB to convert the ATP-contained energy into a lever motion, pulling 2 nucleotides of DNA out of the RuvA tetramer per ATP hydrolyzed, thus driving DNA branch migration. The RuvB motors rotate together with the DNA substrate, which together with the progressing nucleotide cycle form the mechanistic basis for DNA recombination by continuous HJ branch migration. Branch migration allows RuvC to scan DNA until it finds its consensus sequence, where it cleaves and resolves cruciform DNA. The chain is Holliday junction branch migration complex subunit RuvB from Leifsonia xyli subsp. xyli (strain CTCB07).